The following is a 137-amino-acid chain: Small ribosomal subunit protein uS12 (137 aa).

Residues 1–57 form a disordered region; it reads MPTINQLVRKPRKSKVEKSKSPALNVGYNSRKKVQTNVSSPQKRGVATRVGTMTPKK. Residue aspartate 102 is modified to 3-methylthioaspartic acid.

The protein belongs to the universal ribosomal protein uS12 family. In terms of assembly, part of the 30S ribosomal subunit. Contacts proteins S8 and S17. May interact with IF1 in the 30S initiation complex.

In terms of biological role, with S4 and S5 plays an important role in translational accuracy. Interacts with and stabilizes bases of the 16S rRNA that are involved in tRNA selection in the A site and with the mRNA backbone. Located at the interface of the 30S and 50S subunits, it traverses the body of the 30S subunit contacting proteins on the other side and probably holding the rRNA structure together. The combined cluster of proteins S8, S12 and S17 appears to hold together the shoulder and platform of the 30S subunit. This chain is Small ribosomal subunit protein uS12, found in Streptococcus suis (strain 98HAH33).